Here is a 374-residue protein sequence, read N- to C-terminus: Carboxypeptidase O (374 aa).

The signal sequence occupies residues 1-20; sequence MKPLLETLYLLGMLVPGGLG. One can recognise a Peptidase M14 domain in the interval 49–344; it reads IYHPMGEIYE…EAVLSVLDDV (296 aa). The Zn(2+) site is built by histidine 108 and glutamate 111. 3 N-linked (GlcNAc...) asparagine glycosylation sites follow: asparagine 132, asparagine 174, and asparagine 187. Residue histidine 236 coordinates Zn(2+). Residue asparagine 251 is glycosylated (N-linked (GlcNAc...) asparagine). Catalysis depends on glutamate 310, which acts as the Proton donor/acceptor. Residue aspartate 352 is the site of GPI-anchor amidated aspartate attachment. Positions 353–374 are cleaved as a propeptide — removed in mature form; it reads SAGRVTSATMLLGLLVSCMSLL.

The protein belongs to the peptidase M14 family. It depends on Zn(2+) as a cofactor. N-glycosylated. As to expression, detected in enterocytes of the ileum.

It is found in the apical cell membrane. With respect to regulation, strongly inhibited by potato carboxypeptidase inhibitor, and the chelating agents EDTA and 1,10-phenanthroline. Also inhibited by compounds with multiple carboxylic acid groups such as citrate and succinate, and to a lesser exent the amino acids aspartate and glutamate. Not significantly inhibited by benzylsuccinic acid. Its function is as follows. Carboxypeptidase which preferentially cleaves C-terminal acidic residues from peptides and proteins. Can also cleave C-terminal hydrophobic amino acids, with a preference for small residues over large residues. The protein is Carboxypeptidase O of Homo sapiens (Human).